The following is a 270-amino-acid chain: Vegetative storage protein 1 (270 aa).

The signal sequence occupies residues 1-17; that stretch reads MKILSLSLLLLLAATVS. 2 N-linked (GlcNAc...) asparagine glycosylation sites follow: Asn115 and Asn215.

The protein belongs to the APS1/VSP family. As to expression, expressed in leaves and in gynoecia, especially in styles, the basal and distal ends of ovaries and in siliques.

Functionally, may function as somatic storage protein during early seedling development. The chain is Vegetative storage protein 1 (VSP1) from Arabidopsis thaliana (Mouse-ear cress).